Reading from the N-terminus, the 664-residue chain is Acetylcholinesterase (664 aa).

Residues methionine 1–glycine 29 form the signal peptide. A disulfide bridge links cysteine 95 with cysteine 122. An N-linked (GlcNAc...) asparagine glycan is attached at asparagine 117. Serine 261 (acyl-ester intermediate) is an active-site residue. A disulfide bond links cysteine 315 and cysteine 330. N-linked (GlcNAc...) asparagine glycosylation occurs at asparagine 316. Catalysis depends on charge relay system residues glutamate 390 and histidine 504. Cysteines 466 and 588 form a disulfide. The N-linked (GlcNAc...) asparagine glycan is linked to asparagine 517. The GPI-anchor amidated asparagine moiety is linked to residue asparagine 647. Positions lysine 648 to histidine 664 are cleaved as a propeptide — removed in mature form.

Belongs to the type-B carboxylesterase/lipase family. As to quaternary structure, homodimer; disulfide-linked.

Its subcellular location is the synapse. The protein localises to the cell membrane. It carries out the reaction acetylcholine + H2O = choline + acetate + H(+). Functionally, rapidly hydrolyzes choline released into the synapse. It can hydrolyze butyrylthiocholine. The polypeptide is Acetylcholinesterase (Anopheles stephensi (Indo-Pakistan malaria mosquito)).